The following is a 365-amino-acid chain: tRNA(Met) cytidine acetate ligase (365 aa).

ATP-binding positions include I7 to L20, G96, N152, and R175.

It belongs to the TmcAL family.

The protein resides in the cytoplasm. The catalysed reaction is cytidine(34) in elongator tRNA(Met) + acetate + ATP = N(4)-acetylcytidine(34) in elongator tRNA(Met) + AMP + diphosphate. Functionally, catalyzes the formation of N(4)-acetylcytidine (ac(4)C) at the wobble position of elongator tRNA(Met), using acetate and ATP as substrates. First activates an acetate ion to form acetyladenylate (Ac-AMP) and then transfers the acetyl group to tRNA to form ac(4)C34. This chain is tRNA(Met) cytidine acetate ligase, found in Streptococcus pneumoniae (strain P1031).